Consider the following 337-residue polypeptide: Probable RuBisCO transcriptional regulator (337 aa).

An HTH lysR-type domain is found at 6–63; the sequence is FTLDQLRILKAIAVEGSFKRAADSLYVSQPAVSLQVQNLERQLDVPLFDRGGRRAQLT. Positions 23 to 42 form a DNA-binding region, H-T-H motif; the sequence is FKRAADSLYVSQPAVSLQVQ.

The protein belongs to the LysR transcriptional regulatory family.

Its function is as follows. Trans-acting transcriptional regulator of RuBisCO genes (rbcL and rbcS) expression. This Nostoc sp. (strain PCC 7120 / SAG 25.82 / UTEX 2576) protein is Probable RuBisCO transcriptional regulator (rbcR).